A 554-amino-acid polypeptide reads, in one-letter code: MGHKKNGHRRQIKERENQNKFERSTYTNNAKNNHTQTKDKKLRAGLKKIDEQYKKAVSSAAATDYLLPESNGYLEPENELEKTFKVQQSEIKSSVDVSTANKALDLSLKEFGPYHIKYAKNGTHLLITGRKGHVASMDWRKGQLRAELFLNETCHSATYLQNEQYFAVAQKKYTFIYDHEGTELHRLKQHIEARHLDFLPYHYLLVTAGETGWLKYHDVSTGQLVSELRTKAGPTMAMAQNPWNAVMHLGHSNGTVSLWSPSMPEPLVKLLSARGPVNSIAIDRSGYYMATTGADRSMKIWDIRNFKQLHSVESLPTPGTNVSISDTGLLALSRGPHVTLWKDALKLSGDSKPCFGSMGGNPHRNTPYMSHLFAGNKVENLGFVPFEDLLGVGHQTGITNLIVPGAGEANYDALELNPFETKKQRQEQEVRTLLNKLPADTITLDPNSIGSVDKRSSTIRLNAKDLAQTTMDANNKAKTNSDIPDVKPDVKGKNSGLRSFLRKKTQNVIDERKLRVQKQLDKEKNIRKRNHQIKQGLISEDHKDVIEEALSRFG.

The segment covering 1 to 12 (MGHKKNGHRRQI) has biased composition (basic residues). The interval 1-39 (MGHKKNGHRRQIKERENQNKFERSTYTNNAKNNHTQTKD) is disordered. The span at 13-23 (KERENQNKFER) shows a compositional bias: basic and acidic residues. Positions 24–35 (STYTNNAKNNHT) are enriched in polar residues. WD repeat units follow at residues 108 to 149 (LKEF…AELF), 230 to 269 (TKAGPTMAMAQNPWNAVMHLGHSNGTVSLWSPSMPEPLVK), 272 to 311 (SARGPVNSIAIDRSGYYMATTGADRSMKIWDIRNFKQLHS), and 314 to 351 (SLPTPGTNVSISDTGLLALSRGPHVTLWKDALKLSGDS). Positions 475-496 (NKAKTNSDIPDVKPDVKGKNSG) are disordered.

Interacts with snoRNA U3. Interacts with MPP10. Component of the ribosomal small subunit (SSU) processome composed of at least 40 protein subunits and snoRNA U3.

The protein localises to the nucleus. It localises to the nucleolus. In terms of biological role, involved in nucleolar processing of pre-18S ribosomal RNA. In Saccharomyces cerevisiae (strain ATCC 204508 / S288c) (Baker's yeast), this protein is U3 small nucleolar RNA-associated protein 7 (UTP7).